The sequence spans 79 residues: Acyl carrier protein (79 aa).

Residues 2–77 form the Carrier domain; it reads ENIEQRVKKI…QAIDYVTAHL (76 aa). S37 is subject to O-(pantetheine 4'-phosphoryl)serine.

The protein belongs to the acyl carrier protein (ACP) family. 4'-phosphopantetheine is transferred from CoA to a specific serine of apo-ACP by AcpS. This modification is essential for activity because fatty acids are bound in thioester linkage to the sulfhydryl of the prosthetic group.

It localises to the cytoplasm. Its pathway is lipid metabolism; fatty acid biosynthesis. In terms of biological role, carrier of the growing fatty acid chain in fatty acid biosynthesis. This is Acyl carrier protein from Laribacter hongkongensis (strain HLHK9).